The following is a 129-amino-acid chain: Vacuolar transporter chaperone complex subunit 1 (129 aa).

Position 2 is an N-acetylserine (serine 2). Residues 2–32 lie on the Cytoplasmic side of the membrane; sequence SSAPLLQRTPGKKIALPTRVEPKVFFANERT. The chain crosses the membrane as a helical span at residues 33–53; that stretch reads FLSWLNFTVMLGGLGVGLLNF. Residues 54-59 are Vacuolar-facing; it reads GDKIGR. Residues 60–80 traverse the membrane as a helical segment; sequence VSAGLFTFVAMGTMIYALVTY. Over 81–98 the chain is Cytoplasmic; the sequence is HWRAAAIRRRGSGPYDDR. A helical transmembrane segment spans residues 99–119; that stretch reads LGPTLLCFFLLVAVIINFILR. Topologically, residues 120–129 are vacuolar; it reads LKYNDANTKL.

Belongs to the VTC1 family. As to quaternary structure, the VTC core complex is an integral membrane heterooligomer composed of the catalytic subunit VTC4 and the accessory subunits VTC1, VTC2 and VTC3. The complex exists in 2 different sub-complexes: VTC1-VTC2-VCT4 and VCT1-VTC3-VTC4. The VCT1-VTC3-VTC4 subcomplex is mostly found on the vacuolar membrane. The VTC1-VTC2-VCT4 subcomplex is observed in the cell periphery, probably ER and nuclear envelope, but localizes to the vacuole under phosphate starvation. Each subunit contains 3 transmembrane helices. VTC1 is a small membrane protein without hydrophilic domain. VTC2, VTC3 and VTC4 are related and have 2 hydrophilic domains that face the cytosol, an N-terminal SPX domain and the central core domain. The central core in VTC4 is the catalytic domain, with the essential catalytic lysine replaced by isoleucine and leucine in VTC2 and VTC3, respectively. The core complex associates with the accessory subunit VTC5. The complex interacts with the v-SNARE NYV1 and with the V(0) subunit of V-ATPase VPH1.

It is found in the vacuole membrane. It localises to the cytoplasm. The protein localises to the cell cortex. The protein resides in the endoplasmic reticulum membrane. Its subcellular location is the cytoplasmic vesicle. It is found in the autophagosome membrane. Accessory subunit of the vacuolar transporter chaperone (VTC) complex. The VTC complex acts as a vacuolar polyphosphate polymerase that catalyzes the synthesis of inorganic polyphosphate (polyP) via transfer of phosphate from ATP to a growing polyP chain, releasing ADP. VTC exposes its catalytic domain VTC4 to the cytosol, where the growing polyP chain winds through a tunnel-shaped pocket, integrating cytoplasmic polymer synthesis with polyP membrane translocation. The VTC complex carries 9 vacuolar transmembrane domains, which are likely to constitute the translocation channel into the organelle lumen. PolyP synthesis is tightly coupled to its transport into the vacuole lumen, in order to avoid otherwise toxic intermediates in the cytosol, and it depends on the proton gradient across the membrane, formed by V-ATPase. VTC1 contributes only 3 transmembrane domains to the complex. The VTC complex also plays a role in vacuolar membrane fusion. Required for SEC18/NSF activity in SNARE priming, membrane binding of LMA1 and V(0) trans-complex formation. In Saccharomyces cerevisiae (strain ATCC 204508 / S288c) (Baker's yeast), this protein is Vacuolar transporter chaperone complex subunit 1.